The chain runs to 355 residues: Chorismate synthase (355 aa).

R46 serves as a coordination point for NADP(+). FMN-binding positions include 123–125, 233–234, G273, 288–292, and R314; these read RAS, NG, and KPTPS.

The protein belongs to the chorismate synthase family. As to quaternary structure, homotetramer. The cofactor is FMNH2.

It catalyses the reaction 5-O-(1-carboxyvinyl)-3-phosphoshikimate = chorismate + phosphate. The protein operates within metabolic intermediate biosynthesis; chorismate biosynthesis; chorismate from D-erythrose 4-phosphate and phosphoenolpyruvate: step 7/7. Its function is as follows. Catalyzes the anti-1,4-elimination of the C-3 phosphate and the C-6 proR hydrogen from 5-enolpyruvylshikimate-3-phosphate (EPSP) to yield chorismate, which is the branch point compound that serves as the starting substrate for the three terminal pathways of aromatic amino acid biosynthesis. This reaction introduces a second double bond into the aromatic ring system. The sequence is that of Chorismate synthase from Campylobacter concisus (strain 13826).